Reading from the N-terminus, the 541-residue chain is Protein yellow (541 aa).

A signal peptide spans 1–21 (MFQDKGWVLVTLIALVTPSWA). An N-linked (GlcNAc...) asparagine glycan is attached at Asn-144.

It belongs to the major royal jelly protein family.

It localises to the secreted. Its function is as follows. Controls the pigmentation pattern of the adult cuticle and larval mouth parts. The protein is Protein yellow (y) of Drosophila erecta (Fruit fly).